We begin with the raw amino-acid sequence, 238 residues long: Ribonuclease PH (238 aa).

Phosphate-binding positions include Arg86 and 124–126 (GTR).

Belongs to the RNase PH family. Homohexameric ring arranged as a trimer of dimers.

The enzyme catalyses tRNA(n+1) + phosphate = tRNA(n) + a ribonucleoside 5'-diphosphate. Phosphorolytic 3'-5' exoribonuclease that plays an important role in tRNA 3'-end maturation. Removes nucleotide residues following the 3'-CCA terminus of tRNAs; can also add nucleotides to the ends of RNA molecules by using nucleoside diphosphates as substrates, but this may not be physiologically important. Probably plays a role in initiation of 16S rRNA degradation (leading to ribosome degradation) during starvation. This is Ribonuclease PH from Histophilus somni (strain 2336) (Haemophilus somnus).